We begin with the raw amino-acid sequence, 110 residues long: Period circadian protein (110 aa).

The interval 23 to 97 (VTNTSIAGTG…GGAGGGGGVT (75 aa)) is disordered. 12 tandem repeats follow at residues 30 to 31 (GT), 33 to 34 (GT), 36 to 37 (GT), 38 to 39 (GT), 40 to 41 (GT), 42 to 43 (GT), 44 to 45 (GT), 46 to 47 (GT), 48 to 49 (GT), 50 to 51 (GT), 52 to 53 (GT), and 54 to 55 (GT). Gly residues predominate over residues 30–63 (GTGGTGGTGTGTGTGTGTGTGTGTGTDTGTGTGT). Residues 30–79 (GTGGTGGTGTGTGTGTGTGTGTGTGTDTGTGTGTRNGTNSGTNSGTRTGT) are 24 X 2 AA approximate tandem repeats of G-T. The stretch at 56–57 (DT) is one 13; approximate repeat. A run of 3 repeats spans residues 58–59 (GT), 60–61 (GT), and 62–63 (GT). The 17; approximate repeat unit spans residues 64–65 (RN). The segment covering 64–83 (RNGTNSGTNSGTRTGTASSY) has biased composition (low complexity). Repeat 18 spans residues 66–67 (GT). The stretch at 68–69 (NS) is one 19; approximate repeat. Residues 70 to 71 (GT) form repeat 20. Residues 72 to 73 (NS) form a 21; approximate repeat. Repeat unit 22 spans residues 74-75 (GT). A 23; approximate repeat occupies 76–77 (RT). The stretch at 78–79 (GT) is repeat 24. Gly residues predominate over residues 84-96 (RGGGGGAGGGGGV).

In terms of assembly, forms a heterodimer with timeless (TIM); the complex then translocates into the nucleus. Phosphorylated with a circadian rhythmicity, probably by the double-time protein (dbt). Phosphorylation could be implicated in the stability of per monomer and in the formation of heterodimer per-tim.

The protein localises to the nucleus. It is found in the cytoplasm. Its subcellular location is the perinuclear region. In terms of biological role, essential for biological clock functions. Determines the period length of circadian and ultradian rhythms; an increase in PER dosage leads to shortened circadian rhythms and a decrease leads to lengthened circadian rhythms. Essential for the circadian rhythmicity of locomotor activity, eclosion behavior, and for the rhythmic component of the male courtship song that originates in the thoracic nervous system. The biological cycle depends on the rhythmic formation and nuclear localization of the TIM-PER complex. Light induces the degradation of TIM, which promotes elimination of PER. Nuclear activity of the heterodimer coordinatively regulates PER and TIM transcription through a negative feedback loop. Behaves as a negative element in circadian transcriptional loop. Does not appear to bind DNA, suggesting indirect transcriptional inhibition. The protein is Period circadian protein (per) of Drosophila erecta (Fruit fly).